The primary structure comprises 457 residues: F-box/LRR-repeat protein At3g62440 (457 aa).

In terms of domain architecture, F-box spans M1–S49. LRR repeat units follow at residues G53–W79, L147–H174, F177–G202, W229–D254, W283–T310, and L337–G362.

The chain is F-box/LRR-repeat protein At3g62440 from Arabidopsis thaliana (Mouse-ear cress).